Reading from the N-terminus, the 698-residue chain is D-(-)-3-hydroxybutyrate oligomer hydrolase (698 aa).

Residues 1 to 32 (MTTIRGGSRRASLPALALLGVLLGACHSDDNA) form the signal peptide. S310 (charge relay system) is an active-site residue.

The protein belongs to the D-(-)-3-hydroxybutyrate oligomer hydrolase family.

It is found in the secreted. It carries out the reaction (3R)-hydroxybutanoate dimer + H2O = 2 (R)-3-hydroxybutanoate + H(+). It participates in lipid metabolism; butanoate metabolism. Functionally, participates in the degradation of poly-3-hydroxybutyrate (PHB). It works downstream of poly(3-hydroxybutyrate) depolymerase, hydrolyzing D(-)-3-hydroxybutyrate oligomers of various length (3HB-oligomers) into 3HB-monomers. This Burkholderia thailandensis (strain ATCC 700388 / DSM 13276 / CCUG 48851 / CIP 106301 / E264) protein is D-(-)-3-hydroxybutyrate oligomer hydrolase.